A 325-amino-acid chain; its full sequence is MEIFDYDNVLLLPRQCRVESRSECDPSVEFGPRRFKLPVVPANMKTVLDERIARWLAANDYFYVMHRFDLDALAFARSMREQGLCVSISSGVKPADYAVIDSLATSGVGADYITIDIAHGHAESVRRMIAHIKQRLPEAFVIAGNVGTPEALIDLENWGADATKVGIGPGKVCITRLKTGFGTGGWQLSALKWCARVATKPIIADGGIRHHGDIAKSVRFGAAMVMVGSLFAGHEESPGDTVEVDGRLYKEYYGSASDFNKGEYKHVEGKRILEPVKGRLADTLREMREDLQSSISYAGGRQLSDLRRVNYVILGGENAGEHLLM.

The active-site Thioimidate intermediate is the cysteine 173. Isoleucine 202 to valine 225 lines the NADP(+) pocket.

It belongs to the IMPDH/GMPR family. GuaC type 2 subfamily.

The catalysed reaction is IMP + NH4(+) + NADP(+) = GMP + NADPH + 2 H(+). In terms of biological role, catalyzes the irreversible NADPH-dependent deamination of GMP to IMP. It functions in the conversion of nucleobase, nucleoside and nucleotide derivatives of G to A nucleotides, and in maintaining the intracellular balance of A and G nucleotides. This Leptothrix cholodnii (strain ATCC 51168 / LMG 8142 / SP-6) (Leptothrix discophora (strain SP-6)) protein is GMP reductase.